We begin with the raw amino-acid sequence, 237 residues long: Small ribosomal subunit protein eS4 (237 aa).

Residues 37–100 (IPLAVLLRDV…NEYYRIIPDP (64 aa)) form the S4 RNA-binding domain.

The protein belongs to the eukaryotic ribosomal protein eS4 family.

The chain is Small ribosomal subunit protein eS4 from Caldivirga maquilingensis (strain ATCC 700844 / DSM 13496 / JCM 10307 / IC-167).